The following is a 647-amino-acid chain: DNA ligase (647 aa).

NAD(+) contacts are provided by residues 30–34 (DEEYD), 79–80 (SM), and Glu-106. The active-site N6-AMP-lysine intermediate is Lys-108. NAD(+) is bound by residues Arg-129, Glu-163, and Lys-301. Zn(2+) is bound by residues Cys-395, Cys-398, Cys-411, and Cys-416. In terms of domain architecture, BRCT spans 569–647 (SISNALSGKT…SEYERLKLEV (79 aa)).

The protein belongs to the NAD-dependent DNA ligase family. LigA subfamily. Mg(2+) is required as a cofactor. Requires Mn(2+) as cofactor.

It carries out the reaction NAD(+) + (deoxyribonucleotide)n-3'-hydroxyl + 5'-phospho-(deoxyribonucleotide)m = (deoxyribonucleotide)n+m + AMP + beta-nicotinamide D-nucleotide.. Its function is as follows. DNA ligase that catalyzes the formation of phosphodiester linkages between 5'-phosphoryl and 3'-hydroxyl groups in double-stranded DNA using NAD as a coenzyme and as the energy source for the reaction. It is essential for DNA replication and repair of damaged DNA. This is DNA ligase from Campylobacter concisus (strain 13826).